We begin with the raw amino-acid sequence, 578 residues long: Septation ring formation regulator EzrA (578 aa).

Residues 1–8 (MKNNWIII) are Extracellular-facing. A helical membrane pass occupies residues 9–27 (LVLVIVIIAAVLYLIGYFM). Residues 28-578 (RKKNQEQLDE…NINNPNLTAI (551 aa)) lie on the Cytoplasmic side of the membrane. 3 coiled-coil regions span residues 103 to 165 (RFMK…DDKA), 256 to 285 (QNFAEEIQHAKKRVENSMADLEKTEIAAVE), and 394 to 490 (KILD…DDLE).

Belongs to the EzrA family.

It is found in the cell membrane. Functionally, negative regulator of FtsZ ring formation; modulates the frequency and position of FtsZ ring formation. Inhibits FtsZ ring formation at polar sites. Interacts either with FtsZ or with one of its binding partners to promote depolymerization. This chain is Septation ring formation regulator EzrA, found in Enterococcus faecalis (strain ATCC 700802 / V583).